We begin with the raw amino-acid sequence, 408 residues long: Histidine--tRNA ligase (408 aa).

Belongs to the class-II aminoacyl-tRNA synthetase family. As to quaternary structure, homodimer.

It localises to the cytoplasm. It catalyses the reaction tRNA(His) + L-histidine + ATP = L-histidyl-tRNA(His) + AMP + diphosphate + H(+). This chain is Histidine--tRNA ligase, found in Campylobacter lari (strain RM2100 / D67 / ATCC BAA-1060).